The chain runs to 532 residues: MKESKLSELLNRRLALLGERANLSLLEQCLHGIERECLRVTGEGRLAQTPHPEALGSALTNEQITTDYSESLLEFITPALPDPADTLASLDKIHRFAYSKLGNEYLWSPSMPCPLPAEEDIPIAYYGTSNIGQLKYVYRKGLALRYGKTMQCIAGIHYNFSLPEKLWPLLKEAEGFVGTDRDFQSSSYIALIRNFRRYSWLLMYLFGASPALDAGFLRGRAHQLEQLDPDTLYLPYATSLRMSDLGYQSNAQAGLTPCYNDLASYTDSLRKAVATPYAPYVEVGTHQDGEWVQLNTNILQIENEYYSNIRPKRVTYTGERPIQALMARGIQYVEVRCLDINPFLPMGIDLTESRFLDAFLLYCALNESPLLTNNSCGNATSNFLSVVKEGRRPGLQLQRDGQPVELKEWAAELLEKIAPLAALLDQSHGGDAHSKALDAQLAKVKDSSLTPSAQVLAAMAAHKESFAQFSLRQSQAHAEFFRSEPLAAEEQAKFEELARSSLAQQAELEQNEVGDFDVFVGSYQASILAISN.

The protein belongs to the glutamate--cysteine ligase type 1 family. Type 1 subfamily.

The catalysed reaction is L-cysteine + L-glutamate + ATP = gamma-L-glutamyl-L-cysteine + ADP + phosphate + H(+). It functions in the pathway sulfur metabolism; glutathione biosynthesis; glutathione from L-cysteine and L-glutamate: step 1/2. In Pseudomonas fluorescens (strain Pf0-1), this protein is Glutamate--cysteine ligase.